Consider the following 86-residue polypeptide: Small ribosomal subunit protein bS20 (86 aa).

The protein belongs to the bacterial ribosomal protein bS20 family.

Functionally, binds directly to 16S ribosomal RNA. In Pseudarthrobacter chlorophenolicus (strain ATCC 700700 / DSM 12829 / CIP 107037 / JCM 12360 / KCTC 9906 / NCIMB 13794 / A6) (Arthrobacter chlorophenolicus), this protein is Small ribosomal subunit protein bS20.